We begin with the raw amino-acid sequence, 170 residues long: Large ribosomal subunit protein uL22c (170 aa).

This sequence belongs to the universal ribosomal protein uL22 family. Part of the 50S ribosomal subunit.

It is found in the plastid. The protein localises to the chloroplast. In terms of biological role, this protein binds specifically to 23S rRNA. Its function is as follows. The globular domain of the protein is located near the polypeptide exit tunnel on the outside of the subunit, while an extended beta-hairpin is found that lines the wall of the exit tunnel in the center of the 70S ribosome. The protein is Large ribosomal subunit protein uL22c (rpl22) of Nandina domestica (Heavenly bamboo).